Reading from the N-terminus, the 896-residue chain is DNA double-strand break repair Rad50 ATPase (896 aa).

Residues 32–38 (NGAGKSS) and Gln137 contribute to the ATP site. 5 coiled-coil regions span residues 200–274 (RRYQ…KLQE), 412–505 (EEIR…LISM), 580–611 (IGDI…ESEF), 636–669 (IKLA…IQKR), and 702–731 (RSKV…RMKK). The Zinc-hook domain maps to 411-507 (YEEIRRDIDE…KKRQLISMES (97 aa)). Zn(2+) is bound by residues Cys455 and Cys458.

Belongs to the SMC family. RAD50 subfamily. As to quaternary structure, homodimer. Forms a heterotetramer composed of two Mre11 subunits and two Rad50 subunits. Requires Zn(2+) as cofactor.

In terms of biological role, part of the Rad50/Mre11 complex, which is involved in the early steps of DNA double-strand break (DSB) repair. The complex may facilitate opening of the processed DNA ends to aid in the recruitment of HerA and NurA. Rad50 controls the balance between DNA end bridging and DNA resection via ATP-dependent structural rearrangements of the Rad50/Mre11 complex. The chain is DNA double-strand break repair Rad50 ATPase from Thermoplasma acidophilum (strain ATCC 25905 / DSM 1728 / JCM 9062 / NBRC 15155 / AMRC-C165).